The following is a 141-amino-acid chain: HTH-type transcriptional regulator MntR (141 aa).

The region spanning 1 to 63 (MPTPSMEDYI…YEKYRGLVLT (63 aa)) is the HTH dtxR-type domain. Mn(2+) is bound by residues Asp8, Glu11, His77, Glu99, Glu102, and His103.

Belongs to the DtxR/MntR family. As to quaternary structure, homodimer.

The protein resides in the cytoplasm. With respect to regulation, DNA binding is strongly activated by Mn(2+). In terms of biological role, central regulator of manganese homeostasis. The chain is HTH-type transcriptional regulator MntR from Geobacillus kaustophilus (strain HTA426).